Consider the following 174-residue polypeptide: Shikimate kinase 2 (174 aa).

12 to 17 (GAGKTT) is an ATP binding site. Positions 16 and 32 each coordinate Mg(2+). Substrate contacts are provided by Asp-34, Arg-58, and Gly-79. Residues 112-126 (AEDPEEAQRPSLTGK) are LID domain. Position 120 (Arg-120) interacts with ATP. Position 139 (Arg-139) interacts with substrate. Gln-155 is an ATP binding site.

The protein belongs to the shikimate kinase family. AroL subfamily. Monomer. The cofactor is Mg(2+).

Its subcellular location is the cytoplasm. It carries out the reaction shikimate + ATP = 3-phosphoshikimate + ADP + H(+). The protein operates within metabolic intermediate biosynthesis; chorismate biosynthesis; chorismate from D-erythrose 4-phosphate and phosphoenolpyruvate: step 5/7. Catalyzes the specific phosphorylation of the 3-hydroxyl group of shikimic acid using ATP as a cosubstrate. The protein is Shikimate kinase 2 of Yersinia pseudotuberculosis serotype IB (strain PB1/+).